A 201-amino-acid chain; its full sequence is Aminoglycoside N(6')-acetyltransferase type 1 (201 aa).

The 168-residue stretch at 25–192 folds into the N-acetyltransferase domain; it reads VTLRLMTEHD…PAVYMVQTRQ (168 aa). Substrate-binding residues include W51 and D154. Acetyl-CoA is bound at residue N159.

In terms of assembly, homodimer.

It catalyses the reaction kanamycin B + acetyl-CoA = N(6')-acetylkanamycin B + CoA + H(+). Its function is as follows. Catalyzes the transfer of an acetyl group from acetyl-CoA to the 6'-amino group of aminoglycoside molecules conferring resistance to antibiotics containing the purpurosamine ring including amikacin and kanamycin. The chain is Aminoglycoside N(6')-acetyltransferase type 1 (aacA4) from Serratia marcescens.